Reading from the N-terminus, the 526-residue chain is Phosphoenolpyruvate carboxylase (526 aa).

Belongs to the PEPCase type 2 family. As to quaternary structure, homotetramer. Mg(2+) is required as a cofactor.

It catalyses the reaction oxaloacetate + phosphate = phosphoenolpyruvate + hydrogencarbonate. Catalyzes the irreversible beta-carboxylation of phosphoenolpyruvate (PEP) to form oxaloacetate (OAA), a four-carbon dicarboxylic acid source for the tricarboxylic acid cycle. The protein is Phosphoenolpyruvate carboxylase of Methanosarcina mazei (strain ATCC BAA-159 / DSM 3647 / Goe1 / Go1 / JCM 11833 / OCM 88) (Methanosarcina frisia).